A 309-amino-acid chain; its full sequence is tRNA N6-adenosine threonylcarbamoyltransferase (309 aa).

Positions 108 and 112 each coordinate Fe cation. Substrate-binding positions include 130–134 (LVSGG), Asp-163, Gly-176, Asp-180, and Asn-269. Asp-293 contacts Fe cation.

The protein belongs to the KAE1 / TsaD family. The cofactor is Fe(2+).

The protein localises to the cytoplasm. The catalysed reaction is L-threonylcarbamoyladenylate + adenosine(37) in tRNA = N(6)-L-threonylcarbamoyladenosine(37) in tRNA + AMP + H(+). In terms of biological role, required for the formation of a threonylcarbamoyl group on adenosine at position 37 (t(6)A37) in tRNAs that read codons beginning with adenine. Is involved in the transfer of the threonylcarbamoyl moiety of threonylcarbamoyl-AMP (TC-AMP) to the N6 group of A37, together with TsaE and TsaB. TsaD likely plays a direct catalytic role in this reaction. The sequence is that of tRNA N6-adenosine threonylcarbamoyltransferase from Mycoplasmopsis agalactiae (strain NCTC 10123 / CIP 59.7 / PG2) (Mycoplasma agalactiae).